The sequence spans 80 residues: Small ribosomal subunit protein bS16 (80 aa).

Belongs to the bacterial ribosomal protein bS16 family.

This chain is Small ribosomal subunit protein bS16, found in Nitrosococcus oceani (strain ATCC 19707 / BCRC 17464 / JCM 30415 / NCIMB 11848 / C-107).